The primary structure comprises 369 residues: Signal recognition particle receptor FtsY (369 aa).

The segment covering glycine 20–threonine 42 has biased composition (basic and acidic residues). The disordered stretch occupies residues glycine 20 to isoleucine 58. The segment covering glutamine 44–glutamine 53 has biased composition (low complexity). GTP-binding positions include glycine 180 to threonine 187, aspartate 262 to arginine 266, and threonine 320 to aspartate 323.

The protein belongs to the GTP-binding SRP family. FtsY subfamily. Part of the signal recognition particle protein translocation system, which is composed of SRP and FtsY.

It is found in the cell membrane. Its subcellular location is the cytoplasm. The catalysed reaction is GTP + H2O = GDP + phosphate + H(+). Its function is as follows. Involved in targeting and insertion of nascent membrane proteins into the cytoplasmic membrane. Acts as a receptor for the complex formed by the signal recognition particle (SRP) and the ribosome-nascent chain (RNC). This is Signal recognition particle receptor FtsY from Sulfolobus acidocaldarius (strain ATCC 33909 / DSM 639 / JCM 8929 / NBRC 15157 / NCIMB 11770).